The primary structure comprises 109 residues: Lipoprotein BsmA (109 aa).

Residues 1-24 (MVSRKRNSVIYRFASLLLVLMLSA) form the signal peptide. Cys-25 is lipidated: N-palmitoyl cysteine. A lipid anchor (S-diacylglycerol cysteine) is attached at Cys-25.

It belongs to the BhsA/McbA family.

The protein localises to the cell membrane. Involved in protection of biofilms against oxidative stress. The protein is Lipoprotein BsmA (bsmA) of Escherichia coli (strain K12).